A 115-amino-acid chain; its full sequence is Promotilin (115 aa).

Positions 1-25 (MLSRKATAVLLAVHAAAMLASQTEA) are cleaved as a signal peptide. The interval 43 to 72 (RYKGQKKSLSVQQRSEEVGPVDPTEPWEEK) is disordered.

Belongs to the motilin family.

The protein localises to the secreted. Functionally, plays an important role in the regulation of interdigestive gastrointestinal motility and indirectly causes rhythmic contraction of duodenal and colonic smooth muscle. The sequence is that of Promotilin (MLN) from Bos taurus (Bovine).